Here is a 103-residue protein sequence, read N- to C-terminus: Large ribosomal subunit protein eL14 (103 aa).

Belongs to the eukaryotic ribosomal protein eL14 family.

This Ignicoccus hospitalis (strain KIN4/I / DSM 18386 / JCM 14125) protein is Large ribosomal subunit protein eL14.